A 618-amino-acid chain; its full sequence is Zinc finger protein 48 (618 aa).

Met-1 is modified (N-acetylmethionine). 2 stretches are compositionally biased toward basic and acidic residues: residues 1–22 and 39–51; these read MERAVEPWGPDLHRPEEREPQR and EFEHTPQEDDLGF. 2 disordered regions span residues 1–51 and 78–109; these read MERA…DLGF and LWVQREGLGKPQPRDRGPRLLGEPRWGQASSD. A Glycyl lysine isopeptide (Lys-Gly) (interchain with G-Cter in SUMO2) cross-link involves residue Lys-87. 2 C2H2-type zinc fingers span residues 112-134 and 140-162; these read AVCGECGKSFRQMSDLVKHQRTH and YKCGVCGKGFGDSSARIKHQRTH. The interval 157-189 is disordered; sequence KHQRTHSGEKPYRARPPAQGPPKIPRSRIPAGE. Residue Lys-179 forms a Glycyl lysine isopeptide (Lys-Gly) (interchain with G-Cter in SUMO2) linkage. 2 C2H2-type zinc fingers span residues 192-214 and 220-242; these read TICGECGKSFRQSSDLVKHQRTH and YKCGICGKGFGDSSARIKHQRTH. Positions 235–271 are disordered; the sequence is RIKHQRTHRGEQPPRPVVPRRQPSRAATAATQGPKAQ. Lys-269 is covalently cross-linked (Glycyl lysine isopeptide (Lys-Gly) (interchain with G-Cter in SUMO2)). 2 consecutive C2H2-type zinc fingers follow at residues 275–297 and 303–325; these read YICTDCGKRFVLSCSLLSHQRSH and FGCDVCGKEFARGSDLVKHLRVH. Lys-329 is covalently cross-linked (Glycyl lysine isopeptide (Lys-Gly) (interchain with G-Cter in SUMO2)). 2 consecutive C2H2-type zinc fingers follow at residues 331–353 and 359–381; these read YLCPECGKGFADSSARVKHLRTH and HACPECDRTFSLSSTLLRHRLTH. Pro residues predominate over residues 392 to 414; it reads YPLPALIPSPPPPPLGTSPPLTP. Residues 392 to 457 are disordered; that stretch reads YPLPALIPSP…DKPHKCPECG (66 aa). A compositionally biased stretch (low complexity) spans 415–432; that stretch reads RSPSHSGEPFGLPGLEPE. The C2H2-type 9 zinc-finger motif lies at 451 to 473; that stretch reads HKCPECGKGFRRSSDLVKHHRVH. Residue Lys-477 forms a Glycyl lysine isopeptide (Lys-Gly) (interchain with G-Cter in SUMO2) linkage. The C2H2-type 10 zinc-finger motif lies at 479–501; the sequence is YLCPECGKGFADSSARVKHLRTH. Residues 500-540 are disordered; that stretch reads THRGERARPPPPSTLLRPHNPPGPVPMAPRPRVRAQPSGPS. A compositionally biased stretch (pro residues) spans 508 to 528; the sequence is PPPPSTLLRPHNPPGPVPMAP. 2 consecutive C2H2-type zinc fingers follow at residues 543 to 565 and 571 to 593; these read HVCGFCGKEFPRSSDLVKHRRTH and YKCAECGKGFGDSSARIKHQRGH. Lys-610 is covalently cross-linked (Glycyl lysine isopeptide (Lys-Gly) (interchain with G-Cter in SUMO2)).

Belongs to the krueppel C2H2-type zinc-finger protein family.

The protein resides in the nucleus. In terms of biological role, may be involved in transcriptional regulation. This chain is Zinc finger protein 48 (ZNF48), found in Homo sapiens (Human).